A 224-amino-acid polypeptide reads, in one-letter code: Biosynthetic peptidoglycan transglycosylase (224 aa).

The helical transmembrane segment at 12 to 32 (ILVVLAILPVFLLLVYSLPFV) threads the bilayer.

This sequence belongs to the glycosyltransferase 51 family.

It localises to the cell inner membrane. The enzyme catalyses [GlcNAc-(1-&gt;4)-Mur2Ac(oyl-L-Ala-gamma-D-Glu-L-Lys-D-Ala-D-Ala)](n)-di-trans,octa-cis-undecaprenyl diphosphate + beta-D-GlcNAc-(1-&gt;4)-Mur2Ac(oyl-L-Ala-gamma-D-Glu-L-Lys-D-Ala-D-Ala)-di-trans,octa-cis-undecaprenyl diphosphate = [GlcNAc-(1-&gt;4)-Mur2Ac(oyl-L-Ala-gamma-D-Glu-L-Lys-D-Ala-D-Ala)](n+1)-di-trans,octa-cis-undecaprenyl diphosphate + di-trans,octa-cis-undecaprenyl diphosphate + H(+). Its pathway is cell wall biogenesis; peptidoglycan biosynthesis. Peptidoglycan polymerase that catalyzes glycan chain elongation from lipid-linked precursors. The chain is Biosynthetic peptidoglycan transglycosylase from Brucella melitensis biotype 1 (strain ATCC 23456 / CCUG 17765 / NCTC 10094 / 16M).